A 686-amino-acid chain; its full sequence is Myb-related protein B (686 aa).

The interval 1 to 28 is disordered; that stretch reads MARRSRGEDQDELHCQDTDSDVPEQRDG. 3 consecutive HTH myb-type domains span residues 26–77, 78–133, and 134–184; these read RDGR…LRVL, NPDL…NPEV, and KKSS…KRKV. DNA-binding regions (H-T-H motif) lie at residues 54–77, 106–129, and 157–180; these read WKFL…LRVL, WTLI…HNHL, and WAEI…NSTI. 2 disordered regions span residues 315 to 355 and 493 to 512; these read CDLT…VTEY and YVVD…LEKY. Over residues 326–343 the composition is skewed to low complexity; that stretch reads PSAGSSSSSNSPVRQTPS.

In terms of assembly, component of the DREAM complex. Expressed in hematopoietic and non hematopoietic cells.

It localises to the nucleus. In terms of biological role, represses v-myb- and c-myb-mediated activation of the mim-1 gene, probably by competing with other myb proteins for binding sites. It is an inhibitory member of the myb family. This chain is Myb-related protein B (MYBL2), found in Gallus gallus (Chicken).